The chain runs to 192 residues: Casparian strip membrane protein 1 (192 aa).

Topologically, residues 1 to 26 are cytoplasmic; the sequence is MTKSVRLEEGDASKVLVPVGSNKGVS. Residues 27–47 form a helical membrane-spanning segment; that stretch reads VMDLVLRLVGIAGTLGAAIAM. The Extracellular segment spans residues 48 to 75; it reads GTNEQTLPFFTRFVVFNAEYDDFRSFRL. A helical membrane pass occupies residues 76 to 96; sequence FVIVNAIVCAYFVLTLPLSIV. Residues 97 to 107 lie on the Cytoplasmic side of the membrane; it reads HIMRSAARGSR. A helical membrane pass occupies residues 108-128; sequence ILLIIMDTVMLALLTAGASAA. At 129–161 the chain is on the extracellular side; it reads ASIVYLAHNGNTSTNWLPVCQQYGDFCQGASGS. N139 is a glycosylation site (N-linked (GlcNAc...) asparagine). The chain crosses the membrane as a helical span at residues 162 to 182; sequence LIGSFGAVVVFILIILLGAIA. The Cytoplasmic portion of the chain corresponds to 183 to 192; sequence LSRHAKRVVL.

This sequence belongs to the Casparian strip membrane proteins (CASP) family. As to quaternary structure, homodimer and heterodimers.

It localises to the cell membrane. Its function is as follows. Regulates membrane-cell wall junctions and localized cell wall deposition. Required for establishment of the Casparian strip membrane domain (CSD) and the subsequent formation of Casparian strips, a cell wall modification of the root endodermis that determines an apoplastic barrier between the intraorganismal apoplasm and the extraorganismal apoplasm and prevents lateral diffusion. In Lactuca saligna (Willowleaf lettuce), this protein is Casparian strip membrane protein 1.